The primary structure comprises 147 residues: Nucleoside diphosphate kinase (147 aa).

Residues K9, R85, T91, R102, and N112 each coordinate ATP. H115 (pros-phosphohistidine intermediate) is an active-site residue.

The protein belongs to the NDK family. Mg(2+) is required as a cofactor.

The catalysed reaction is a 2'-deoxyribonucleoside 5'-diphosphate + ATP = a 2'-deoxyribonucleoside 5'-triphosphate + ADP. The enzyme catalyses a ribonucleoside 5'-diphosphate + ATP = a ribonucleoside 5'-triphosphate + ADP. Functionally, major role in the synthesis of nucleoside triphosphates other than ATP. The ATP gamma phosphate is transferred to the NDP beta phosphate via a ping-pong mechanism, using a phosphorylated active-site intermediate. This chain is Nucleoside diphosphate kinase (NDK1), found in Encephalitozoon cuniculi (strain GB-M1) (Microsporidian parasite).